A 199-amino-acid chain; its full sequence is Twist-related protein (199 aa).

Residues methionine 1–asparagine 43 form a disordered region. The segment covering arginine 25–glutamate 39 has biased composition (basic and acidic residues). One can recognise a bHLH domain in the interval threonine 51–leucine 102.

As to quaternary structure, efficient DNA binding requires dimerization with another bHLH protein. Homodimer. As to expression, expression is seen at the point of medusa formation in the ectodermal and endodermal bud tissues, and in the entocodon which gives rise to all smooth and striated muscle cells. After the subumbrellar plate differentiates from the endoderm, strong expression is detected until the medusa detaches from the gonzoid. Expression is observed in the distal part of the medusa but diminishes in entocodon-derived muscles as the tissues differentiate, with expression disappearing completely after stage 8. In later stages expression is seen in the distal and proximal parts of the bud and depending on state of maturity, in the developing gonadal tissue.

It is found in the nucleus. Functionally, probable transcription factor, which may be responsible for the formation of myoepithelial cells in early muscle development in larva and the formation of non-muscle tissues in later bud stages and mesoderm-like structures in the medusa. The sequence is that of Twist-related protein from Podocoryna carnea (Hydrozoan).